Here is a 292-residue protein sequence, read N- to C-terminus: Formamidopyrimidine-DNA glycosylase (292 aa).

P2 acts as the Schiff-base intermediate with DNA in catalysis. The active-site Proton donor is E3. Catalysis depends on K61, which acts as the Proton donor; for beta-elimination activity. Residues H103, R122, and K168 each contribute to the DNA site. The segment at D254–P288 adopts an FPG-type zinc-finger fold. R278 functions as the Proton donor; for delta-elimination activity in the catalytic mechanism.

It belongs to the FPG family. In terms of assembly, monomer. Requires Zn(2+) as cofactor.

The enzyme catalyses Hydrolysis of DNA containing ring-opened 7-methylguanine residues, releasing 2,6-diamino-4-hydroxy-5-(N-methyl)formamidopyrimidine.. It carries out the reaction 2'-deoxyribonucleotide-(2'-deoxyribose 5'-phosphate)-2'-deoxyribonucleotide-DNA = a 3'-end 2'-deoxyribonucleotide-(2,3-dehydro-2,3-deoxyribose 5'-phosphate)-DNA + a 5'-end 5'-phospho-2'-deoxyribonucleoside-DNA + H(+). Functionally, involved in base excision repair of DNA damaged by oxidation or by mutagenic agents. Acts as a DNA glycosylase that recognizes and removes damaged bases. Has a preference for oxidized purines, such as 7,8-dihydro-8-oxoguanine (8-oxoG). Has AP (apurinic/apyrimidinic) lyase activity and introduces nicks in the DNA strand. Cleaves the DNA backbone by beta-delta elimination to generate a single-strand break at the site of the removed base with both 3'- and 5'-phosphates. The polypeptide is Formamidopyrimidine-DNA glycosylase (Mycobacterium ulcerans (strain Agy99)).